The chain runs to 424 residues: Glutamate-1-semialdehyde 2,1-aminomutase (424 aa).

The residue at position 263 (Lys-263) is an N6-(pyridoxal phosphate)lysine.

This sequence belongs to the class-III pyridoxal-phosphate-dependent aminotransferase family. HemL subfamily. Homodimer. It depends on pyridoxal 5'-phosphate as a cofactor.

Its subcellular location is the cytoplasm. The catalysed reaction is (S)-4-amino-5-oxopentanoate = 5-aminolevulinate. Its pathway is porphyrin-containing compound metabolism; protoporphyrin-IX biosynthesis; 5-aminolevulinate from L-glutamyl-tRNA(Glu): step 2/2. This is Glutamate-1-semialdehyde 2,1-aminomutase from Campylobacter jejuni subsp. jejuni serotype O:2 (strain ATCC 700819 / NCTC 11168).